Consider the following 1185-residue polypeptide: 205 kDa microtubule-associated protein (1185 aa).

Over residues 146–159 (EPNQLPEQLQQQQQ) the composition is skewed to low complexity. Residues 146-196 (EPNQLPEQLQQQQQIESQGVHEDPRQEDEDEHSSVATTYGTSSLSENNSSP) are disordered. Positions 179–196 (SVATTYGTSSLSENNSSP) are enriched in polar residues. Residues serine 354 and serine 448 each carry the phosphoserine modification. A Phosphotyrosine modification is found at tyrosine 450. Phosphoserine is present on residues serine 709, serine 710, and serine 712. Position 721 is a phosphothreonine (threonine 721). The residue at position 728 (serine 728) is a Phosphoserine. Residues 745–977 (TAADGQSISQ…ASTKVRPAAT (233 aa)) are microtubule-binding. Over residues 856 to 866 (SIATKTSTTSS) the composition is skewed to low complexity. 2 disordered regions span residues 856–1035 (SIAT…TSTA) and 1054–1114 (SASL…SSPA). 2 stretches are compositionally biased toward polar residues: residues 867 to 881 (LTGNPRKSLSSNVGS) and 908 to 936 (TITNKPTASGTASDNVTRTTLRPLVSTNA). A Phosphoserine modification is found at serine 874. Positions 940–952 (ATSGTGSVASSTA) are enriched in low complexity. Over residues 989–999 (PRSTISSTTTV) the composition is skewed to polar residues. A compositionally biased stretch (low complexity) spans 1003–1015 (PSTSTPSFSTRSP). 2 stretches are compositionally biased toward polar residues: residues 1016–1026 (NKQQSNGLGKN) and 1054–1066 (SASLTYNNGSTSR). A phosphoserine mark is found at serine 1075 and serine 1086. Polar residues predominate over residues 1100–1111 (LTPQSKDGTAKS). Position 1121 is a phosphoserine (serine 1121).

It is found in the cytoplasm. The protein localises to the cytoskeleton. Its subcellular location is the spindle. Functionally, may play an important role in the regulation of microtubule assembly and interaction. This Drosophila melanogaster (Fruit fly) protein is 205 kDa microtubule-associated protein (Map205).